Reading from the N-terminus, the 275-residue chain is Dermonecrotic toxin SpeSicTox-betaIIA2v (275 aa).

Residue His5 is part of the active site. Mg(2+) is bound by residues Glu25 and Asp27. Residue His41 is the Nucleophile of the active site. Intrachain disulfides connect Cys45–Cys51 and Cys47–Cys190. Residue Asp85 participates in Mg(2+) binding.

The protein belongs to the arthropod phospholipase D family. Class II subfamily. Mg(2+) serves as cofactor. In terms of tissue distribution, expressed by the venom gland.

The protein resides in the secreted. It catalyses the reaction an N-(acyl)-sphingosylphosphocholine = an N-(acyl)-sphingosyl-1,3-cyclic phosphate + choline. The catalysed reaction is an N-(acyl)-sphingosylphosphoethanolamine = an N-(acyl)-sphingosyl-1,3-cyclic phosphate + ethanolamine. It carries out the reaction a 1-acyl-sn-glycero-3-phosphocholine = a 1-acyl-sn-glycero-2,3-cyclic phosphate + choline. The enzyme catalyses a 1-acyl-sn-glycero-3-phosphoethanolamine = a 1-acyl-sn-glycero-2,3-cyclic phosphate + ethanolamine. Its function is as follows. Dermonecrotic toxins cleave the phosphodiester linkage between the phosphate and headgroup of certain phospholipids (sphingolipid and lysolipid substrates), forming an alcohol (often choline) and a cyclic phosphate. This toxin acts on sphingomyelin (SM). It may also act on ceramide phosphoethanolamine (CPE), lysophosphatidylcholine (LPC) and lysophosphatidylethanolamine (LPE), but not on lysophosphatidylserine (LPS), and lysophosphatidylglycerol (LPG). It acts by transphosphatidylation, releasing exclusively cyclic phosphate products as second products. Induces dermonecrosis, hemolysis, increased vascular permeability, edema, inflammatory response, and platelet aggregation. The sequence is that of Dermonecrotic toxin SpeSicTox-betaIIA2v from Sicarius peruensis (Six-eyed sand spider).